The sequence spans 138 residues: uncharacterized protein (138 aa).

The region spanning E9–E133 is the MsrB domain. The Zn(2+) site is built by C49, C52, C97, and C100. The active-site Nucleophile is C122.

This sequence belongs to the MsrB Met sulfoxide reductase family. The cofactor is Zn(2+).

It localises to the cytoplasm. It is found in the nucleus. This is an uncharacterized protein from Schizosaccharomyces pombe (strain 972 / ATCC 24843) (Fission yeast).